A 400-amino-acid polypeptide reads, in one-letter code: 11-beta-hydroxysteroid dehydrogenase type 2 (400 aa).

Position 82–111 (82–111 (TRAVLITGCDTGFGKETAKKLDAMGFTVLA)) interacts with NAD(+). A substrate-binding site is contributed by serine 219. The active-site Proton acceptor is tyrosine 232. The interval 378-400 (PGQPGPVHDTTQDPNPSPTVSAL) is disordered. Over residues 389-400 (QDPNPSPTVSAL) the composition is skewed to polar residues.

Belongs to the short-chain dehydrogenases/reductases (SDR) family. In terms of assembly, interacts with ligand-free cytoplasmic NR3C2. Highly expressed in kidney, adrenal gland and distal colon, and at much lower levels in lung, hypothalamus, hippocampus, and midbrain.

It is found in the microsome. It localises to the endoplasmic reticulum. The catalysed reaction is an 11beta-hydroxysteroid + NAD(+) = an 11-oxosteroid + NADH + H(+). It carries out the reaction corticosterone + NAD(+) = 11-dehydrocorticosterone + NADH + H(+). The enzyme catalyses 11beta,17beta-dihydroxyandrost-4-ene-3-one + NAD(+) = 17beta-hydroxyandrost-4-ene-3,11-dione + NADH + H(+). It catalyses the reaction 11beta-hydroxyandrost-4-ene-3,17-dione + NAD(+) = androst-4-ene-3,11,17-trione + NADH + H(+). It functions in the pathway steroid metabolism. Its activity is regulated as follows. Inhibited by glycyrrhetinic acid. Induced by progesterone, through the Ihh signaling pathway. Its function is as follows. Catalyzes the conversion of biologically active 11beta-hydroxyglucocorticoids (11beta-hydroxysteroid) such as corticosterone, to inactive 11-ketoglucocorticoids (11-oxosteroid) such as 11-dehydrocorticosterone, in the presence of NAD(+). Functions as a dehydrogenase (oxidase), thereby decreasing the concentration of active glucocorticoids, thus protecting the nonselective mineralocorticoid receptor from occupation by glucocorticoids. Plays an important role in maintaining glucocorticoids balance during preimplantation and protects the fetus from excessive maternal corticosterone exposure. Catalyzes the oxidation of 11beta-hydroxytestosterone (11beta,17beta-dihydroxyandrost-4-ene-3-one) to 11-ketotestosterone (17beta-hydroxyandrost-4-ene-3,11-dione), a major bioactive androgen. Catalyzes the conversion of 11beta-hydroxyandrostenedione (11beta-hydroxyandrost-4-ene-3,17-dione) to 11-ketoandrostenedione (androst-4-ene-3,11,17-trione), which can be further metabolized to 11-ketotestosterone. Converts 7-beta-25-dihydroxycholesterol to 7-oxo-25-hydroxycholesterol in vitro. 7-beta-25-dihydroxycholesterol (not 7-oxo-25-hydroxycholesterol) acts as a ligand for the G-protein-coupled receptor (GPCR) Epstein-Barr virus-induced gene 2 (EBI2) and may thereby regulate immune cell migration. This Rattus norvegicus (Rat) protein is 11-beta-hydroxysteroid dehydrogenase type 2 (Hsd11b2).